Reading from the N-terminus, the 212-residue chain is Mediator of RNA polymerase II transcription subunit 20 (212 aa).

The protein belongs to the Mediator complex subunit 20 family. As to quaternary structure, component of the Mediator complex, which is composed of MED1, MED4, MED6, MED7, MED8, MED9, MED10, MED11, MED12, MED13, MED13L, MED14, MED15, MED16, MED17, MED18, MED19, MED20, MED21, MED22, MED23, MED24, MED25, MED26, MED27, MED29, MED30, MED31, CCNC, CDK8 and CDC2L6/CDK11. The MED12, MED13, CCNC and CDK8 subunits form a distinct module termed the CDK8 module. Mediator containing the CDK8 module is less active than Mediator lacking this module in supporting transcriptional activation. Individual preparations of the Mediator complex lacking one or more distinct subunits have been variously termed ARC, CRSP, DRIP, PC2, SMCC and TRAP. Interacts with PPARG.

The protein resides in the nucleus. Functionally, component of the Mediator complex, a coactivator involved in the regulated transcription of nearly all RNA polymerase II-dependent genes. Mediator functions as a bridge to convey information from gene-specific regulatory proteins to the basal RNA polymerase II transcription machinery. Mediator is recruited to promoters by direct interactions with regulatory proteins and serves as a scaffold for the assembly of a functional preinitiation complex with RNA polymerase II and the general transcription factors. This chain is Mediator of RNA polymerase II transcription subunit 20 (MED20), found in Macaca fascicularis (Crab-eating macaque).